Consider the following 740-residue polypeptide: Zinc finger CCCH domain-containing protein 14 (740 aa).

Disordered stretches follow at residues 82 to 240 (SNKQ…NIKG), 254 to 314 (VSAG…DDAV), 390 to 426 (ITPSRDSTPTDDSPTMQKWNGQIEIGDDSEESEDDEE), and 444 to 469 (SFRDEEDELPPTHQLSGGPYAYHHST). Composition is skewed to basic and acidic residues over residues 87-158 (ETSK…EIQR) and 176-185 (EHVRARGEKH). The segment covering 186–200 (DRHHHKDHRRGRSHE) has biased composition (basic residues). The span at 204-214 (ITSTIVRQASA) shows a compositional bias: polar residues. The segment covering 393–409 (SRDSTPTDDSPTMQKWN) has biased composition (polar residues). Positions 414-426 (IGDDSEESEDDEE) are enriched in acidic residues. C3H1-type zinc fingers lie at residues 499–522 (HVKERCIFWPKCTKGDTCAFMHPT) and 523–543 (TNCKNFPNCTFGIRCLFIHPP). Residues 623 to 661 (IKKKPAPGAESEKKEEKSDENESKAEEPKAEVAPVQPKP) are disordered. Over residues 632–652 (ESEKKEEKSDENESKAEEPKA) the composition is skewed to basic and acidic residues. 3 consecutive C3H1-type zinc fingers follow at residues 668-691 (LHSMVLCRYAGACRNPICHFKHPK), 674-691 (CRYAGACRNPICHFKHPK), and 693-709 (CRFGANCRNPSCYFYHK).

This sequence belongs to the ZC3H14 family.

The protein resides in the nucleus. Its subcellular location is the cytoplasm. RNA-binding protein involved in the biogenesis of circular RNAs (circRNAs), which are produced by back-splicing circularization of pre-mRNAs. The polypeptide is Zinc finger CCCH domain-containing protein 14 (sut-2) (Caenorhabditis elegans).